The chain runs to 279 residues: Elongation factor Ts (279 aa).

The involved in Mg(2+) ion dislocation from EF-Tu stretch occupies residues 80–83; it reads TDFV.

This sequence belongs to the EF-Ts family.

The protein resides in the cytoplasm. Associates with the EF-Tu.GDP complex and induces the exchange of GDP to GTP. It remains bound to the aminoacyl-tRNA.EF-Tu.GTP complex up to the GTP hydrolysis stage on the ribosome. This chain is Elongation factor Ts (tsf), found in Borreliella burgdorferi (strain ATCC 35210 / DSM 4680 / CIP 102532 / B31) (Borrelia burgdorferi).